We begin with the raw amino-acid sequence, 132 residues long: DNA-directed RNA polymerase subunit Rpo8 (132 aa).

This sequence belongs to the archaeal Rpo8 RNA polymerase subunit family. As to quaternary structure, part of the 13-subunit RNA polymerase complex.

The protein resides in the cytoplasm. The enzyme catalyses RNA(n) + a ribonucleoside 5'-triphosphate = RNA(n+1) + diphosphate. Functionally, DNA-dependent RNA polymerase (RNAP) catalyzes the transcription of DNA into RNA using the four ribonucleoside triphosphates as substrates. This Saccharolobus solfataricus (strain ATCC 35092 / DSM 1617 / JCM 11322 / P2) (Sulfolobus solfataricus) protein is DNA-directed RNA polymerase subunit Rpo8.